The chain runs to 365 residues: Pituitary-specific positive transcription factor 1 (365 aa).

Residues 5 to 12 (AFSADSFT) carry the 9aaTAD motif. Positions 160–191 (PAVLSEEPPLGGTKDLRLRSRPPDDPPDMDSP) are disordered. The segment covering 173–183 (KDLRLRSRPPD) has biased composition (basic and acidic residues). The POU-specific domain occupies 188–262 (MDSPQIRELE…ILAKWLDEAE (75 aa)). The segment at residues 278 to 337 (KRKRRTTISLGAKEALERSFREKIKPSSQEIVRMAEGLHLEKEVVRVWFCNRRQREKRVK) is a DNA-binding region (homeobox).

It belongs to the POU transcription factor family. Class-1 subfamily.

The protein localises to the nucleus. Functionally, transcription factor that activates growth hormone and prolactin genes. Specifically binds to the consensus sequence 5'-TAAAT-3'. This chain is Pituitary-specific positive transcription factor 1 (pou1f1), found in Oncorhynchus keta (Chum salmon).